Here is a 125-residue protein sequence, read N- to C-terminus: Small ribosomal subunit protein eS6 (125 aa).

Belongs to the eukaryotic ribosomal protein eS6 family.

This chain is Small ribosomal subunit protein eS6, found in Pyrococcus horikoshii (strain ATCC 700860 / DSM 12428 / JCM 9974 / NBRC 100139 / OT-3).